A 665-amino-acid polypeptide reads, in one-letter code: Succinate dehydrogenase [ubiquinone] flavoprotein subunit B, mitochondrial (665 aa).

Residues 1 to 45 constitute a mitochondrion transit peptide; that stretch reads MALLKVAPSRLLSRALQLTSTLQNCTATSIAARRNFHFTVYGRKD. FAD is bound by residues A72, A75, T94, K95, and S101. H102 carries the tele-8alpha-FAD histidine modification. FAD is bound by residues T103, G108, A224, and D278. Residues H299, R343, and H410 each coordinate oxaloacetate. The Proton acceptor role is filled by R343. E443 serves as a coordination point for FAD. The oxaloacetate site is built by R454 and A457. 2 residues coordinate FAD: S459 and L460.

The protein belongs to the FAD-dependent oxidoreductase 2 family. FRD/SDH subfamily. Component of complex II composed of four subunits: a flavoprotein (FP), an iron-sulfur protein (IP), and a cytochrome b composed of a large and a small subunit. The cofactor is FAD.

It localises to the mitochondrion inner membrane. It catalyses the reaction a ubiquinone + succinate = a ubiquinol + fumarate. The enzyme catalyses (R)-malate + a quinone = enol-oxaloacetate + a quinol. The catalysed reaction is (S)-malate + a quinone = enol-oxaloacetate + a quinol. Its pathway is carbohydrate metabolism; tricarboxylic acid cycle; fumarate from succinate (eukaryal route): step 1/1. Enol-oxaloacetate inhibits the succinate dehydrogenase activity. Its function is as follows. Flavoprotein (FP) subunit of succinate dehydrogenase (SDH) that is involved in complex II of the mitochondrial electron transport chain and is responsible for transferring electrons from succinate to ubiquinone (coenzyme Q). SDH also oxidizes malate to the non-canonical enol form of oxaloacetate, enol-oxaloacetate. Enol-oxaloacetate, which is a potent inhibitor of the succinate dehydrogenase activity, is further isomerized into keto-oxaloacetate. The polypeptide is Succinate dehydrogenase [ubiquinone] flavoprotein subunit B, mitochondrial (sdha-b) (Xenopus laevis (African clawed frog)).